A 301-amino-acid chain; its full sequence is RNA polymerase II holoenzyme cyclin-like subunit (301 aa).

Residues 53–142 (QQLIKLGKRM…LGECEFALIS (90 aa)) enclose the Cyclin N-terminal domain.

It belongs to the cyclin family. Cyclin C subfamily. Component of the srb8-11 complex, a regulatory module of the Mediator complex.

It localises to the nucleus. Its function is as follows. Component of the srb8-11 complex. The srb8-11 complex is a regulatory module of the Mediator complex which is itself involved in regulation of basal and activated RNA polymerase II-dependent transcription. The srb8-11 complex may be involved in the transcriptional repression of a subset of genes regulated by Mediator. It may inhibit the association of the Mediator complex with RNA polymerase II to form the holoenzyme complex. The srb8-11 complex phosphorylates the C-terminal domain (CTD) of the largest subunit of RNA polymerase II. This Aspergillus oryzae (strain ATCC 42149 / RIB 40) (Yellow koji mold) protein is RNA polymerase II holoenzyme cyclin-like subunit (ssn8).